Consider the following 823-residue polypeptide: MKRHRPVSSSESSDECPSTSFTSSSMYRKKSKNPKEQKKSAEVFRKDLISAMKIPDSHHVNPDSYYLFTDTWKEEWEKGVQVPANPDSVPTPSLRIISEKVKEMLFVRPRKYIRCSSPESAEPGYINTLEQAASTCRYDLDDMDIFWLQELNEDLGEMGYGPIDETLMEKTIEVLERHCHENMNHAIETVEGLGIEYDEDVICDVCRSPDSEEGNDMVFCDKCNVCVHQACYGILKIPEGSWLCRSCVLGIYPQCVLCPKKGGAMKTTRTGTKWAHVSCALWIPEVSIACPERMEPVTKISHIPPSRWALVCNLCKLKTGACIQCSVKSCITAFHVTCAFEHGLEMKTILDEGDEVKFKSFCLKHSQNKPKLGDAEYHHHRVAEQSQAKSEKTSLRAQKLRELEEEFYTLVQVEDVAKEMELSAFTVDFIYNYWKLKRKSNFNKPLIPPKEEEENGLVQPKEESIHTRMRMFMHLRQDLERVRNLCYMISRREKLKLSHTKVQEQIFGLQVQLINEEITEGLSLTNALENSLFYPPPRITLKLKMPKSTSEDCKDSSTETEHQLSSPGSSSPGHSKRSPQMPEEPLDMNVKIYPRYPLESKSNCLQTSRSHSRCETKSSSPTPRAPSAEFYHGQSLGKPLALQAALHGQVSIGNGKNQPNSRVSSSNGLEGNWSGNITQKVNSSEVCYDQESMLSSHLPSPGNIRKSSMEHFSRSFKEATNTWVKPTEDLQYCVKPTKNVSSKEQLWGRQLLRRPTGRASYQETDGYCPDLEPSDSEAEGEGSKETPRVKRESSDRENPSHDSARECHGKTKTHPHSHSSMQR.

Residues methionine 1–serine 40 form a disordered region. Over residues serine 8–serine 20 the composition is skewed to low complexity. An N6-acetyllysine mark is found at lysine 30, lysine 32, and lysine 35. The PHD-type 1 zinc-finger motif lies at aspartate 200–glycine 250. The C2HC pre-PHD-type zinc-finger motif lies at tyrosine 252 to valine 286. A PHD-type 2 zinc finger spans residues leucine 310–serine 366. Disordered stretches follow at residues leucine 543–proline 585 and lysine 601–tyrosine 631. Residues threonine 549–histidine 562 show a composition bias toward basic and acidic residues. Phosphoserine is present on residues serine 566 and serine 578. The residue at position 601 (lysine 601) is an N6-acetyllysine. A Phosphoserine modification is found at serine 608. Residue lysine 638 is modified to N6-acetyllysine. A disordered region spans residues serine 651–asparagine 676. Lysine 735 is modified (N6-acetyllysine). The disordered stretch occupies residues threonine 756 to arginine 823. A phosphoserine mark is found at serine 774 and serine 776. Residues glutamate 781–glycine 809 are compositionally biased toward basic and acidic residues.

Belongs to the JADE family. As to quaternary structure, component of the HBO1 complex composed at least of ING4 or ING5, MYST2/HBO1, MEAF6, and one of JADE1, JADE2 and JADE3.

Scaffold subunit of some HBO1 complexes, which have a histone H4 acetyltransferase activity. In Mus musculus (Mouse), this protein is Protein Jade-3 (Jade3).